The following is a 186-amino-acid chain: Acetyltransferase PA2578 (186 aa).

The region spanning 12 to 176 is the N-acetyltransferase domain; the sequence is LQLVPFQLGH…NVVLMGLLRQ (165 aa). Residues Gln37, 97–99, Gly105, Asn137, and 142–144 contribute to the CoA site; these read IVL and HLY.

Homodimer.

Functionally, catalyzes the transfer of an acetyl group from acetyl coenzyme A (AcCoA) to an acceptor substrate and releases both CoA and the acetylated product. It prefers the antibiotic chloramphenicol. In Pseudomonas aeruginosa (strain ATCC 15692 / DSM 22644 / CIP 104116 / JCM 14847 / LMG 12228 / 1C / PRS 101 / PAO1), this protein is Acetyltransferase PA2578.